We begin with the raw amino-acid sequence, 272 residues long: Putative phosphoenolpyruvate synthase regulatory protein (272 aa).

Residue 152-159 (GVSRCGKT) coordinates ADP.

Belongs to the pyruvate, phosphate/water dikinase regulatory protein family. PSRP subfamily.

It carries out the reaction [pyruvate, water dikinase] + ADP = [pyruvate, water dikinase]-phosphate + AMP + H(+). The enzyme catalyses [pyruvate, water dikinase]-phosphate + phosphate + H(+) = [pyruvate, water dikinase] + diphosphate. Functionally, bifunctional serine/threonine kinase and phosphorylase involved in the regulation of the phosphoenolpyruvate synthase (PEPS) by catalyzing its phosphorylation/dephosphorylation. This Pseudomonas putida (strain ATCC 700007 / DSM 6899 / JCM 31910 / BCRC 17059 / LMG 24140 / F1) protein is Putative phosphoenolpyruvate synthase regulatory protein.